Here is a 195-residue protein sequence, read N- to C-terminus: Holliday junction branch migration complex subunit RuvA (195 aa).

Residues 1-64 form a domain I region; sequence MIKGVEGEIT…DRAPEIYGFK (64 aa). Positions 65–137 are domain II; that stretch reads DRAEYNVFLM…LYDLVKDYAV (73 aa). Residues 137–141 are flexible linker; the sequence is VEFPK. The domain III stretch occupies residues 142 to 195; the sequence is ELSDVSEDAVGALTALGFDMTSAKLAVNEVLKEQTVENTQELVRKALRKLNKTR.

It belongs to the RuvA family. Homotetramer. Forms an RuvA(8)-RuvB(12)-Holliday junction (HJ) complex. HJ DNA is sandwiched between 2 RuvA tetramers; dsDNA enters through RuvA and exits via RuvB. An RuvB hexamer assembles on each DNA strand where it exits the tetramer. Each RuvB hexamer is contacted by two RuvA subunits (via domain III) on 2 adjacent RuvB subunits; this complex drives branch migration. In the full resolvosome a probable DNA-RuvA(4)-RuvB(12)-RuvC(2) complex forms which resolves the HJ.

It localises to the cytoplasm. In terms of biological role, the RuvA-RuvB-RuvC complex processes Holliday junction (HJ) DNA during genetic recombination and DNA repair, while the RuvA-RuvB complex plays an important role in the rescue of blocked DNA replication forks via replication fork reversal (RFR). RuvA specifically binds to HJ cruciform DNA, conferring on it an open structure. The RuvB hexamer acts as an ATP-dependent pump, pulling dsDNA into and through the RuvAB complex. HJ branch migration allows RuvC to scan DNA until it finds its consensus sequence, where it cleaves and resolves the cruciform DNA. The chain is Holliday junction branch migration complex subunit RuvA from Kosmotoga olearia (strain ATCC BAA-1733 / DSM 21960 / TBF 19.5.1).